Reading from the N-terminus, the 88-residue chain is Protein transport protein SBH2 (88 aa).

Residues 1 to 42 (MAASVPPGGQRILQKRRQAQSIKEKQAKQTPTSTRQAGYGGS) are disordered. At 1–61 (MAASVPPGGQ…DEANGFRVDS (61 aa)) the chain is on the cytoplasmic side. Residues 28–42 (KQTPTSTRQAGYGGS) are compositionally biased toward polar residues. A helical transmembrane segment spans residues 62 to 82 (LVVLFLSVGFIFSVIALHLLT).

The protein belongs to the SEC61-beta family. In terms of assembly, component of the heterotrimeric Ssh1 complex, which is composed of SSH1, SBH2 and SSS1.

It localises to the endoplasmic reticulum membrane. Functionally, part of the Ssh1 complex, which probably is the major component of a channel-forming translocon complex that may function exclusively in the cotranslational pathway of protein endoplasmic reticulum (ER) import. The sequence is that of Protein transport protein SBH2 (SBH2) from Saccharomyces cerevisiae (strain ATCC 204508 / S288c) (Baker's yeast).